The primary structure comprises 602 residues: Beta-(1--&gt;2)glucan export ATP-binding/permease protein NdvA (602 aa).

One can recognise an ABC transmembrane type-1 domain in the interval 21–306 (GWLLAFANLL…VVSFINNVFM (286 aa)). 6 helical membrane-spanning segments follow: residues 22 to 42 (WLLA…PVLF), 63 to 83 (FLAA…LVAL), 141 to 161 (EHFA…YLNW), 163 to 183 (LAIL…FVVR), 240 to 262 (VLSW…VLAI), and 280 to 300 (IVMF…VVSF). Positions 340–573 (VEFNDVTFSY…GGHFAELARA (234 aa)) constitute an ABC transporter domain. 373-380 (GPTGAGKS) serves as a coordination point for ATP.

Belongs to the ABC transporter superfamily. Beta-(1--&gt;2)glucan exporter (TC 3.A.1.108.1) family. In terms of assembly, homodimer.

It is found in the cell inner membrane. It carries out the reaction [(1-&gt;2)-beta-D-glucosyl](n)(in) + ATP + H2O = [(1-&gt;2)-beta-D-glucosyl](n)(out) + ADP + phosphate + H(+). Involved in beta-(1--&gt;2)glucan export. Transmembrane domains (TMD) form a pore in the inner membrane and the ATP-binding domain (NBD) is responsible for energy generation. This chain is Beta-(1--&gt;2)glucan export ATP-binding/permease protein NdvA, found in Bradyrhizobium diazoefficiens (strain JCM 10833 / BCRC 13528 / IAM 13628 / NBRC 14792 / USDA 110).